The following is a 387-amino-acid chain: Alkanesulfonate monooxygenase (387 aa).

This sequence belongs to the SsuD family.

It catalyses the reaction an alkanesulfonate + FMNH2 + O2 = an aldehyde + FMN + sulfite + H2O + 2 H(+). In terms of biological role, catalyzes the desulfonation of aliphatic sulfonates. This Ralstonia nicotianae (strain ATCC BAA-1114 / GMI1000) (Ralstonia solanacearum) protein is Alkanesulfonate monooxygenase.